A 259-amino-acid polypeptide reads, in one-letter code: Global transcriptional regulator CodY (259 aa).

Residues 1–155 form a GAF domain region; that stretch reads MTLLEKTRKI…GGTVVGMEIL (155 aa). Positions 203–222 form a DNA-binding region, H-T-H motif; sequence ASKIADRVGITRSVIVNALR.

This sequence belongs to the CodY family.

It localises to the cytoplasm. Functionally, DNA-binding global transcriptional regulator which is involved in the adaptive response to starvation and acts by directly or indirectly controlling the expression of numerous genes in response to nutrient availability. During rapid exponential growth, CodY is highly active and represses genes whose products allow adaptation to nutrient depletion. This Listeria monocytogenes serotype 4b (strain CLIP80459) protein is Global transcriptional regulator CodY.